Here is a 300-residue protein sequence, read N- to C-terminus: Ubiquinone biosynthesis protein COQ4, mitochondrial (300 aa).

Residues histidine 173, aspartate 174, histidine 177, and glutamate 189 each coordinate Zn(2+).

It belongs to the COQ4 family. Component of a multi-subunit COQ enzyme complex, composed of at least COQ3, COQ4, COQ5, COQ6, COQ7 and COQ9. Zn(2+) serves as cofactor.

It is found in the mitochondrion inner membrane. It catalyses the reaction a 4-hydroxy-3-methoxy-5-(all-trans-polyprenyl)benzoate + H(+) = a 2-methoxy-6-(all-trans-polyprenyl)phenol + CO2. It functions in the pathway cofactor biosynthesis; ubiquinone biosynthesis. Functionally, lyase that catalyzes the C1-decarboxylation of 4-hydroxy-3-methoxy-5-(all-trans-polyprenyl)benzoic acid into 2-methoxy-6-(all-trans-polyprenyl)phenol during ubiquinone biosynthesis. This is Ubiquinone biosynthesis protein COQ4, mitochondrial from Cryptococcus neoformans var. neoformans serotype D (strain JEC21 / ATCC MYA-565) (Filobasidiella neoformans).